A 341-amino-acid polypeptide reads, in one-letter code: L-threonine 3-dehydrogenase (341 aa).

Cys38 is a binding site for Zn(2+). Active-site charge relay system residues include Thr40 and His43. Positions 63, 64, 93, 96, 99, and 107 each coordinate Zn(2+). NAD(+) contacts are provided by residues Ile175, Asp195, Arg200, 262-264 (LGI), and 286-287 (IY).

It belongs to the zinc-containing alcohol dehydrogenase family. Homotetramer. Zn(2+) serves as cofactor.

Its subcellular location is the cytoplasm. The catalysed reaction is L-threonine + NAD(+) = (2S)-2-amino-3-oxobutanoate + NADH + H(+). Its pathway is amino-acid degradation; L-threonine degradation via oxydo-reductase pathway; glycine from L-threonine: step 1/2. In terms of biological role, catalyzes the NAD(+)-dependent oxidation of L-threonine to 2-amino-3-ketobutyrate. The protein is L-threonine 3-dehydrogenase of Photorhabdus laumondii subsp. laumondii (strain DSM 15139 / CIP 105565 / TT01) (Photorhabdus luminescens subsp. laumondii).